The chain runs to 403 residues: Formin-like protein 21b (403 aa).

Residues 1–380 (MELLFTATLL…KAAKEAEMEK (380 aa)) form the FH2 domain. The interval 373–403 (AKEAEMEKTKKRVSLTNKKASGVGEEESCLI) is disordered.

Belongs to the formin-like family. Class-II subfamily.

The polypeptide is Formin-like protein 21b (FH21B) (Arabidopsis thaliana (Mouse-ear cress)).